A 295-amino-acid polypeptide reads, in one-letter code: UDP-N-acetylenolpyruvoylglucosamine reductase (295 aa).

The FAD-binding PCMH-type domain occupies 23-188 (QVGGPADFLA…ISAKFALKPG (166 aa)). Residue Arg167 is part of the active site. Ser217 serves as the catalytic Proton donor. The active site involves Glu287.

This sequence belongs to the MurB family. It depends on FAD as a cofactor.

Its subcellular location is the cytoplasm. It carries out the reaction UDP-N-acetyl-alpha-D-muramate + NADP(+) = UDP-N-acetyl-3-O-(1-carboxyvinyl)-alpha-D-glucosamine + NADPH + H(+). Its pathway is cell wall biogenesis; peptidoglycan biosynthesis. Cell wall formation. The sequence is that of UDP-N-acetylenolpyruvoylglucosamine reductase from Streptococcus equi subsp. equi (strain 4047).